Reading from the N-terminus, the 595-residue chain is Actin-histidine N-methyltransferase (595 aa).

A disordered region spans residues 1–22; the sequence is MGKKSRVKTQKSGTGATATVSP. Positions 10–20 are enriched in polar residues; that stretch reads QKSGTGATATV. S-adenosyl-L-methionine is bound by residues arginine 75, 104 to 106, arginine 254, 275 to 279, and 325 to 327; these read EGF, DMCNH, and SGF. Residues 94–314 enclose the SET domain; it reads EGFEMVNFKE…AGEQIYIFYG (221 aa). At serine 513 the chain carries Phosphoserine. Residues 549 to 572 show a composition bias toward polar residues; sequence ENGLVNGENSVPNGTRSENENLNQ. The disordered stretch occupies residues 549–595; that stretch reads ENGLVNGENSVPNGTRSENENLNQEESKRAVEDAKGSSSDNTAEVKE. Basic and acidic residues predominate over residues 573-583; it reads EESKRAVEDAK. The span at 584–595 shows a compositional bias: polar residues; it reads GSSSDNTAEVKE.

This sequence belongs to the class V-like SAM-binding methyltransferase superfamily. SETD3 actin-histidine methyltransferase family. Interacts with MYOD1. Post-translationally, phosphorylated by GSK3B, which is required for recognition by the SCF(FBXW7) complex and subsequent degradation. Ubiquitinated by the SCF(FBXW7) complex following phosphorylation by GSK3B, leading to its degradation by the proteasome.

Its subcellular location is the cytoplasm. The protein localises to the nucleus. It catalyses the reaction L-histidyl-[protein] + S-adenosyl-L-methionine = N(tele)-methyl-L-histidyl-[protein] + S-adenosyl-L-homocysteine + H(+). In terms of biological role, protein-histidine N-methyltransferase that specifically mediates 3-methylhistidine (tele-methylhistidine) methylation of actin at 'His-73'. Histidine methylation of actin is required for smooth muscle contraction of the laboring uterus during delivery. Does not have protein-lysine N-methyltransferase activity and probably only catalyzes histidine methylation of actin. This Papio anubis (Olive baboon) protein is Actin-histidine N-methyltransferase.